The sequence spans 253 residues: Decarboxylase DEC1 (253 aa).

Catalysis depends on Lys121, which acts as the Schiff-base intermediate with acetoacetate.

The protein belongs to the ADC family.

It functions in the pathway mycotoxin biosynthesis. In terms of biological role, decarboxylase; part of the Tox1B locus, one of the 2 loci that mediate the biosynthesis of T-toxin, a family of linear polyketides 37 to 45 carbons in length, of which the major component is 41 carbons, and which leads to high virulence to maize. One of the PKSs (PKS1 or PKS2) could synthesize a precursor, used subsequently by the other PKS as starter unit, to add additional carbons. Variability in the length of the final carbon backbone C35-47 could be achieved by varying the number of condensation cycles, or use of different starter or extender units or might be due to decarboxylation of the penultimate product, catalyzed by DEC1. Additional proteins are required for the biosynthesis of T-toxin, including oxidoreductases RED1, RED2, RED3, LAM1 and OXI1, as well as esterase TOX9. The polypeptide is Decarboxylase DEC1 (Cochliobolus heterostrophus (strain C4 / ATCC 48331 / race T) (Southern corn leaf blight fungus)).